Here is a 221-residue protein sequence, read N- to C-terminus: Zingipain-2 (221 aa).

2 disulfides stabilise this stretch: C24/C65 and C58/C98. C27 is an active-site residue. 2 N-linked (GlcNAc...) asparagine glycosylation sites follow: N99 and N156. A disulfide bond links C155 and C206. Residue H161 is part of the active site.

This sequence belongs to the peptidase C1 family.

It catalyses the reaction Preferential cleavage of peptides with a proline residue at the P2 position.. Cysteine proteinase with a specific activity toward peptides with a proline residue at the P2 position. The sequence is that of Zingipain-2 from Zingiber officinale (Ginger).